The following is a 300-amino-acid chain: MSGRFSRSIYVGNLPGDIREHEIEDIFYKYGRIVDIELKVPPRPPCYCFVEFEHSRDAEDAIKGRDGYNLDGCRLRVELAHGGRGQSSSDRRGGYGGGGSGYGGGGGGGGSARFGVSRHSEFRVIVRGLPSSASWQDLKDHMRKAGDVCFAEVTRDSDGTYGVVDYTNYDDMKYAIRKLDDTEFRNPWARGFIRVKKYESSRSRSRSPSRSRSRSRSRSRSRGRGRSHSRSRSLSRSKSPRKDLSKSPRRSLSRSISKSRSPSPDKKKSPPRAMSRSKSRSRSRSRSPSKSPPKVREGSV.

In terms of domain architecture, RRM 1 spans 7-82 (RSIYVGNLPG…CRLRVELAHG (76 aa)). Disordered regions lie at residues 81 to 110 (HGGRGQSSSDRRGGYGGGGSGYGGGGGGGG) and 198 to 300 (YESS…EGSV). Gly residues predominate over residues 94–110 (GYGGGGSGYGGGGGGGG). The RRM 2 domain occupies 122–200 (FRVIVRGLPS…GFIRVKKYES (79 aa)). Positions 203 to 239 (SRSRSPSRSRSRSRSRSRSRGRGRSHSRSRSLSRSKS) are enriched in basic residues. Serine 207, serine 209, serine 231, serine 233, serine 239, serine 259, serine 275, and serine 285 each carry phosphoserine. A compositionally biased stretch (low complexity) spans 253-262 (SRSISKSRSP). Residues 275–287 (SRSKSRSRSRSRS) show a composition bias toward basic residues.

It belongs to the splicing factor SR family. SR subfamily. In terms of assembly, component of the spliceosome.

It is found in the nucleus speckle. The protein resides in the nucleus. The protein localises to the nucleoplasm. Functionally, probably involved in intron recognition and spliceosome assembly. The polypeptide is Serine/arginine-rich splicing factor SR34A (SR34A) (Arabidopsis thaliana (Mouse-ear cress)).